The chain runs to 171 residues: Peptide deformylase (171 aa).

2 residues coordinate Fe cation: Cys-92 and His-134. Residue Glu-135 is part of the active site. Residue His-138 participates in Fe cation binding.

Belongs to the polypeptide deformylase family. Requires Fe(2+) as cofactor.

It carries out the reaction N-terminal N-formyl-L-methionyl-[peptide] + H2O = N-terminal L-methionyl-[peptide] + formate. Its function is as follows. Removes the formyl group from the N-terminal Met of newly synthesized proteins. Requires at least a dipeptide for an efficient rate of reaction. N-terminal L-methionine is a prerequisite for activity but the enzyme has broad specificity at other positions. This Polynucleobacter necessarius subsp. necessarius (strain STIR1) protein is Peptide deformylase.